The primary structure comprises 257 residues: 5-oxoprolinase subunit A (257 aa).

The protein belongs to the LamB/PxpA family. As to quaternary structure, forms a complex composed of PxpA, PxpB and PxpC.

The catalysed reaction is 5-oxo-L-proline + ATP + 2 H2O = L-glutamate + ADP + phosphate + H(+). Its function is as follows. Catalyzes the cleavage of 5-oxoproline to form L-glutamate coupled to the hydrolysis of ATP to ADP and inorganic phosphate. This chain is 5-oxoprolinase subunit A, found in Oceanobacillus iheyensis (strain DSM 14371 / CIP 107618 / JCM 11309 / KCTC 3954 / HTE831).